Reading from the N-terminus, the 274-residue chain is NH(3)-dependent NAD(+) synthetase (274 aa).

46 to 53 (GISGGQDS) contacts ATP. Mg(2+) is bound at residue aspartate 52. Arginine 140 is a binding site for deamido-NAD(+). Threonine 160 contacts ATP. Position 165 (glutamate 165) interacts with Mg(2+). Positions 173 and 180 each coordinate deamido-NAD(+). ATP contacts are provided by lysine 189 and threonine 211. 260–261 (HK) contacts deamido-NAD(+).

It belongs to the NAD synthetase family. Homodimer.

The catalysed reaction is deamido-NAD(+) + NH4(+) + ATP = AMP + diphosphate + NAD(+) + H(+). It functions in the pathway cofactor biosynthesis; NAD(+) biosynthesis; NAD(+) from deamido-NAD(+) (ammonia route): step 1/1. Functionally, catalyzes the ATP-dependent amidation of deamido-NAD to form NAD. Uses ammonia as a nitrogen source. This chain is NH(3)-dependent NAD(+) synthetase, found in Lysinibacillus sphaericus (strain C3-41).